The primary structure comprises 189 residues: MVAETVAIAVWAMLPAYVPNNVAVLAGGGRPIDGGRTLDKLTDEDGVLYDENRILGDGKTWRGTAFGTAAGVVLALLLNQLQPFVAGTVGVPQFPIAAAVALAFGAMLGDILASFLKRRTGRQRGAAFPGVDQLDFVIVSLALTAIVATGWFLATFTLPVLVAIFVLTPVLHVSTNGLAYAFGLKDEPW.

5 consecutive transmembrane segments (helical) span residues Val-6–Ala-26, Gly-71–Val-91, Ile-96–Leu-116, Gly-125–Ala-145, and Val-162–Leu-184.

Belongs to the CDP-archaeol synthase family. It depends on Mg(2+) as a cofactor.

The protein localises to the cell membrane. It catalyses the reaction 2,3-bis-O-(geranylgeranyl)-sn-glycerol 1-phosphate + CTP + H(+) = CDP-2,3-bis-O-(geranylgeranyl)-sn-glycerol + diphosphate. It participates in membrane lipid metabolism; glycerophospholipid metabolism. Its function is as follows. Catalyzes the formation of CDP-2,3-bis-(O-geranylgeranyl)-sn-glycerol (CDP-archaeol) from 2,3-bis-(O-geranylgeranyl)-sn-glycerol 1-phosphate (DGGGP) and CTP. This reaction is the third ether-bond-formation step in the biosynthesis of archaeal membrane lipids. The protein is CDP-archaeol synthase of Natronomonas pharaonis (strain ATCC 35678 / DSM 2160 / CIP 103997 / JCM 8858 / NBRC 14720 / NCIMB 2260 / Gabara) (Halobacterium pharaonis).